The following is a 363-amino-acid chain: NAD(P)H-quinone oxidoreductase subunit 1, chloroplastic (363 aa).

8 helical membrane passes run 26–46 (FVWI…GVLV), 96–116 (WLFA…FLVI), 127–147 (ISIG…GLLV), 175–195 (LALC…IEIV), 203–223 (ILGW…ISAL), 253–273 (FGLF…FVTI), 303–323 (GLIA…ASIL), and 343–363 (FLLP…LALL).

The protein belongs to the complex I subunit 1 family. NDH is composed of at least 16 different subunits, 5 of which are encoded in the nucleus.

Its subcellular location is the plastid. The protein localises to the chloroplast thylakoid membrane. It catalyses the reaction a plastoquinone + NADH + (n+1) H(+)(in) = a plastoquinol + NAD(+) + n H(+)(out). The enzyme catalyses a plastoquinone + NADPH + (n+1) H(+)(in) = a plastoquinol + NADP(+) + n H(+)(out). NDH shuttles electrons from NAD(P)H:plastoquinone, via FMN and iron-sulfur (Fe-S) centers, to quinones in the photosynthetic chain and possibly in a chloroplast respiratory chain. The immediate electron acceptor for the enzyme in this species is believed to be plastoquinone. Couples the redox reaction to proton translocation, and thus conserves the redox energy in a proton gradient. In Zygnema circumcarinatum (Green alga), this protein is NAD(P)H-quinone oxidoreductase subunit 1, chloroplastic.